A 493-amino-acid chain; its full sequence is Protein kinase PINOID 2 (493 aa).

The segment at 1-53 (MAAIKEESDYDSSRSSLTAPDSRRSWISDIGSSSSVSARSFGGDTPASSCRYK) is disordered. Over residues 27-44 (ISDIGSSSSVSARSFGGD) the composition is skewed to low complexity. One can recognise a Protein kinase domain in the interval 80–443 (FRLVRRLGSG…SAEVKRHPFF (364 aa)). ATP is bound by residues 86 to 94 (LGSGDLGNV) and Lys-120. Catalysis depends on Asp-216, which acts as the Proton acceptor. Residues 295–306 (GGGAAAGNNGDG) show a composition bias toward gly residues. Disordered stretches follow at residues 295-320 (GGGA…TAEP) and 458-493 (EVPA…FDYF). Acidic residues predominate over residues 307–319 (DGNDEEAETETAE). The 50-residue stretch at 444–493 (KGVNWALVRSVRPPEVPAPPAPAPKKVMTMSKKERQEPYNYRPENHFDYF) folds into the AGC-kinase C-terminal domain. The span at 474–493 (SKKERQEPYNYRPENHFDYF) shows a compositional bias: basic and acidic residues.

Belongs to the protein kinase superfamily. Ser/Thr protein kinase family.

The catalysed reaction is L-seryl-[protein] + ATP = O-phospho-L-seryl-[protein] + ADP + H(+). It catalyses the reaction L-threonyl-[protein] + ATP = O-phospho-L-threonyl-[protein] + ADP + H(+). Functionally, serine/threonine-protein kinase involved in the regulation of auxin signaling. The chain is Protein kinase PINOID 2 (PID2) from Oryza sativa subsp. japonica (Rice).